The sequence spans 484 residues: Protein phosphatase 1B (484 aa).

Residues methionine 1–asparagine 14 are compositionally biased toward basic and acidic residues. Residues methionine 1–asparagine 20 form a disordered region. Residue glycine 2 is the site of N-myristoyl glycine attachment. Residue lysine 12 forms a Glycyl lysine isopeptide (Lys-Gly) (interchain with G-Cter in ISG15) linkage. Residues arginine 23–phenylalanine 295 enclose the PPM-type phosphatase domain. Residues aspartate 60 and glycine 61 each coordinate Mn(2+). Lysine 142 participates in a covalent cross-link: Glycyl lysine isopeptide (Lys-Gly) (interchain with G-Cter in ISG15). Positions 243 and 286 each coordinate Mn(2+). Residue serine 391 is modified to Phosphoserine. The disordered stretch occupies residues glutamate 431 to leucine 484. Residues threonine 440–glutamate 456 are compositionally biased toward polar residues.

The protein belongs to the PP2C family. Monomer. Interacts with PAK6. Interacts with the phosphorylated form of IKBKB/IKKB. It depends on Mg(2+) as a cofactor. Requires Mn(2+) as cofactor. In terms of processing, isgylation negatively regulates its activity. N-myristoylation is essential for the recognition of its substrates for dephosphorylation.

It localises to the cytoplasm. Its subcellular location is the cytosol. It is found in the membrane. The enzyme catalyses O-phospho-L-seryl-[protein] + H2O = L-seryl-[protein] + phosphate. It catalyses the reaction O-phospho-L-threonyl-[protein] + H2O = L-threonyl-[protein] + phosphate. Its function is as follows. Enzyme with a broad specificity. Dephosphorylates PRKAA1 and PRKAA2. Inhibits TBK1-mediated antiviral signaling by dephosphorylating it at 'Ser-172'. Plays an important role in the termination of TNF-alpha-mediated NF-kappa-B activation through dephosphorylating and inactivating IKBKB/IKKB. In Bos taurus (Bovine), this protein is Protein phosphatase 1B (PPM1B).